The chain runs to 39 residues: Cytochrome b559 subunit beta (39 aa).

A helical transmembrane segment spans residues 14–30 (WLTVHGLAVPTVSFLGS). His-18 is a heme binding site.

It belongs to the PsbE/PsbF family. In terms of assembly, heterodimer of an alpha subunit and a beta subunit. PSII is composed of 1 copy each of membrane proteins PsbA, PsbB, PsbC, PsbD, PsbE, PsbF, PsbH, PsbI, PsbJ, PsbK, PsbL, PsbM, PsbT, PsbX, PsbY, PsbZ, Psb30/Ycf12, at least 3 peripheral proteins of the oxygen-evolving complex and a large number of cofactors. It forms dimeric complexes. Heme b is required as a cofactor.

Its subcellular location is the plastid. The protein localises to the chloroplast thylakoid membrane. In terms of biological role, this b-type cytochrome is tightly associated with the reaction center of photosystem II (PSII). PSII is a light-driven water:plastoquinone oxidoreductase that uses light energy to abstract electrons from H(2)O, generating O(2) and a proton gradient subsequently used for ATP formation. It consists of a core antenna complex that captures photons, and an electron transfer chain that converts photonic excitation into a charge separation. The polypeptide is Cytochrome b559 subunit beta (Cucumis sativus (Cucumber)).